The sequence spans 115 residues: MATETFARLRFARISPQKCRLVADQIRGMPVERALQELTFSPKKGAAIVKKVLESAIANAEHNEGADVDELKVSQIYIDQGPTLKRIHARAKGRANRILKRTSHITVAVGEKVKG.

It belongs to the universal ribosomal protein uL22 family. Part of the 50S ribosomal subunit.

This protein binds specifically to 23S rRNA; its binding is stimulated by other ribosomal proteins, e.g. L4, L17, and L20. It is important during the early stages of 50S assembly. It makes multiple contacts with different domains of the 23S rRNA in the assembled 50S subunit and ribosome. Functionally, the globular domain of the protein is located near the polypeptide exit tunnel on the outside of the subunit, while an extended beta-hairpin is found that lines the wall of the exit tunnel in the center of the 70S ribosome. This is Large ribosomal subunit protein uL22 from Thioalkalivibrio sulfidiphilus (strain HL-EbGR7).